A 570-amino-acid polypeptide reads, in one-letter code: Formate--tetrahydrofolate ligase (570 aa).

Position 65–72 (65–72 (TPFGEGKT)) interacts with ATP.

The protein belongs to the formate--tetrahydrofolate ligase family.

It catalyses the reaction (6S)-5,6,7,8-tetrahydrofolate + formate + ATP = (6R)-10-formyltetrahydrofolate + ADP + phosphate. The protein operates within one-carbon metabolism; tetrahydrofolate interconversion. The sequence is that of Formate--tetrahydrofolate ligase from Shewanella woodyi (strain ATCC 51908 / MS32).